Consider the following 630-residue polypeptide: MEINYEKVGLKVGLEIHQQLNTKRKLFCHCPTILRDDEPDGEIVRVLRPSLSEMGEVDRAALIEARKGKKFIYQFYNDTTCLVELDEEPPHPPSEEALRIALEVALLMNMNVVDVAYTMRKIVIDGSNTSGFQRTIFLARDGYIETSEGKVGITSLCLEEDAARKIEDRGDAVVYNLDRLGIPLVEISTAPDIKTPKMAKEAARRIGEILRATGKVKRGLGTIRQDINISIKDGARIEVKGVQDLDLIEKVVENEVIRQLNLLKIRDELRERNAEVVEKIFDVTEIFKDCKSKIIQNALKKKNGKVKAVLLKGFAGLVGKEIQPGRRLGTEFSDRAKVIAGVGGLFHTDELPKYGITEEEVKKLKEFVNAEENDAVIIVADEESKVDRALEAVIERAKEALIGVPEETRRALEDGNTAYLRPLPGAARMYPETDIPPIIIKKEFIEEIRANLPELPEEKFERFKKEYKLNDELAKKMVLSYYVDLFEDLCKKFKNVKPVLIATTLEGTLKEIKREGYDIDKLEDRHLEETFKALSEGKIAKEGIVEVLKGFCEFPDKSIDEILEIKGLKGLSKEEVEKIIEGIIKEHLNVVKEKGEKAYGFLMGRCMAKLRGKADGKLVNDILRKKLKEI.

The protein belongs to the GatB/GatE family. GatE subfamily. Heterodimer of GatD and GatE.

The enzyme catalyses L-glutamyl-tRNA(Gln) + L-glutamine + ATP + H2O = L-glutaminyl-tRNA(Gln) + L-glutamate + ADP + phosphate + H(+). Its function is as follows. Allows the formation of correctly charged Gln-tRNA(Gln) through the transamidation of misacylated Glu-tRNA(Gln) in organisms which lack glutaminyl-tRNA synthetase. The reaction takes place in the presence of glutamine and ATP through an activated gamma-phospho-Glu-tRNA(Gln). The GatDE system is specific for glutamate and does not act on aspartate. The polypeptide is Glutamyl-tRNA(Gln) amidotransferase subunit E (Methanocaldococcus jannaschii (strain ATCC 43067 / DSM 2661 / JAL-1 / JCM 10045 / NBRC 100440) (Methanococcus jannaschii)).